A 402-amino-acid chain; its full sequence is Phosphoglycerate kinase (402 aa).

Residues 24-26, arginine 40, 63-66, arginine 122, and arginine 155 contribute to the substrate site; these read DFN and HFGR. Residues lysine 206, glycine 297, glutamate 328, and 358 to 361 each bind ATP; that span reads GGDS.

It belongs to the phosphoglycerate kinase family. In terms of assembly, monomer.

The protein localises to the cytoplasm. The catalysed reaction is (2R)-3-phosphoglycerate + ATP = (2R)-3-phospho-glyceroyl phosphate + ADP. The protein operates within carbohydrate degradation; glycolysis; pyruvate from D-glyceraldehyde 3-phosphate: step 2/5. This Prochlorococcus marinus (strain MIT 9301) protein is Phosphoglycerate kinase.